A 1928-amino-acid chain; its full sequence is Lactase/phlorizin hydrolase (1928 aa).

The N-terminal stretch at 1-21 (MELPWTALFLSTVLLGLSCQG) is a signal peptide. A propeptide spans 22 to 867 (SDWESDRNFI…LPVRADFTSR (846 aa)) (XBetaGly). Residues 22 to 1883 (SDWESDRNFI…LMLGIAEAQT (1862 aa)) are Extracellular-facing. Residues 46–289 (NYPPGKQGSD…FIYTLKLEDC (244 aa)) form a glycosyl hydrolase-1 1; Region I region. The segment at 364–856 (VWAAFANQSR…GFSAKKVKRN (493 aa)) is glycosyl hydrolase-1 2; Region II. 7 N-linked (GlcNAc...) asparagine glycosylation sites follow: N370, N514, N824, N936, N948, N991, and N1037. The segment at 904-1367 (RFRDDFLWGV…DLIANNGMPL (464 aa)) is glycosyl hydrolase-1 3; Region III. Phlorizin hydrolase/Glycosylceramidase activity. E1067 functions as the Proton donor; for phlorizin hydrolase/Glycosylceramidase activity in the catalytic mechanism. N1176 and N1240 each carry an N-linked (GlcNAc...) asparagine glycan. The Nucleophile; for phlorizin hydrolase/Glycosylceramidase activity role is filled by E1274. N1281 and N1509 each carry an N-linked (GlcNAc...) asparagine glycan. The glycosyl hydrolase-1 4; Region IV. Lactase activity stretch occupies residues 1374 to 1847 (LYGEFPKGFI…CNGFPDPAQG (474 aa)). E1539 (proton donor; for lactase activity) is an active-site residue. 2 N-linked (GlcNAc...) asparagine glycosylation sites follow: N1657 and N1684. The active-site Nucleophile; for lactase activity is the E1750. N1762 and N1815 each carry an N-linked (GlcNAc...) asparagine glycan. Residues 1884–1902 (ALYVLFALLLLGACSLAFL) form a helical membrane-spanning segment. Residues 1903 to 1928 (TYNTGRRSKQGNAQPSQHQLSPISSF) lie on the Cytoplasmic side of the membrane.

It belongs to the glycosyl hydrolase 1 family. Homodimer. N-glycosylated. Intestine.

The protein localises to the apical cell membrane. It catalyses the reaction lactose + H2O = beta-D-galactose + D-glucose. It carries out the reaction phlorizin + H2O = phloretin + beta-D-glucose. The enzyme catalyses D-cellobiose + H2O = beta-D-glucose + D-glucose. The catalysed reaction is quercetin 4'-O-beta-D-glucoside + H2O = quercetin + beta-D-glucose. It catalyses the reaction quercetin 3-O-beta-D-glucoside + H2O = quercetin + beta-D-glucose. It carries out the reaction kaempferol 3-O-beta-D-glucoside + H2O = kaempferol + beta-D-glucose. The enzyme catalyses luteolin 7-O-beta-D-glucoside + H2O = luteolin + beta-D-glucose. The catalysed reaction is luteolin 4'-O-beta-D-glucoside + H2O = luteolin + beta-D-glucose. It catalyses the reaction (2S)-naringenin 7-O-beta-D-glucoside + H2O = (2S)-naringenin + beta-D-glucose. It carries out the reaction eriodictyol-7-O-beta-D-glucoside + H2O = (S)-eriodictyol + beta-D-glucose. The enzyme catalyses apigenin 7-O-beta-D-glucoside + H2O = apigenin + beta-D-glucose. The catalysed reaction is daidzein 7-O-beta-D-glucoside + H2O = daidzein + beta-D-glucose + H(+). It catalyses the reaction genistein 7-O-beta-D-glucoside + H2O = genistein + beta-D-glucose. It carries out the reaction a beta-D-galactosyl-N-acylsphingosine + H2O = a ceramide + beta-D-galactose.. The enzyme catalyses beta-D-glucosyl-(1&lt;-&gt;1')-N-hexadecanoylsphing-4-enine + H2O = N-hexadecanoylsphing-4-enine + beta-D-glucose. The catalysed reaction is beta-D-galactosyl-(1&lt;-&gt;1')-N-hexadecanoylsphing-4-enine + H2O = beta-D-galactose + N-hexadecanoylsphing-4-enine. It catalyses the reaction beta-D-galactosyl-(1&lt;-&gt;1')-N-hexadecanoylsphinganine + H2O = N-hexadecanoylsphinganine + beta-D-galactose. It carries out the reaction beta-D-glucosyl-(1&lt;-&gt;1')-N-hexadecanoylsphinganine + H2O = N-hexadecanoylsphinganine + beta-D-glucose. In terms of biological role, broad specificity glycosidase of the intestinal brush border membrane that hydrolyzes lactose, the main sugar in mammalian milk, to produce D-glucose and D-galactose. The mature protein is composed of two domains that catalyze the hydrolysis of beta-glucopyranosides and beta-galactopyranosides, with a preference for hydrophilic aglycones (in lactose and cellobiose) for one domain and hydrophobic aglycones (in phlorizin and glycosylceramides) for the other. This chain is Lactase/phlorizin hydrolase, found in Rattus norvegicus (Rat).